A 1485-amino-acid polypeptide reads, in one-letter code: Cystic fibrosis transmembrane conductance regulator (1485 aa).

Residues 1 to 78 (MQKTPLEKAS…KLINALKRCF (78 aa)) lie on the Cytoplasmic side of the membrane. The chain crosses the membrane as a helical span at residues 79 to 99 (FWKFLFYGILLYLGEVTKAVQ). An ABC transmembrane type-1 1 domain is found at 82–366 (FLFYGILLYL…WAVQTWYDSL (285 aa)). The Extracellular segment spans residues 100–123 (PLLLGRIIASYDRDNEHERSIAYY). A helical membrane pass occupies residues 124-147 (LAIGLCLLFVVRMLLLHPAIFGLH). Residues 148–196 (HIGMQMRIAMFSLIYKKTLKLSSKVLDKISTGQLVSLLSNNLNKFDEGL) lie on the Cytoplasmic side of the membrane. The helical transmembrane segment at 197-217 (ALAHFVWIAPLQVLLLMGLLW) threads the bilayer. At 218–223 (DLLQAS) the chain is on the extracellular side. Residues 224–244 (AFCGLGFLIILSLFQARLGRM) traverse the membrane as a helical segment. Residues 245–299 (MMKYKDKRAGKINERLVITSQIIENIQSVKAYCWENAMEKIIETIRETELKLTRK) lie on the Cytoplasmic side of the membrane. Residues 300 to 320 (AAYVRYFNSSAFFFSGFFVVF) traverse the membrane as a helical segment. The Extracellular segment spans residues 321–340 (LSIVPHLLLDGISLRKIFTT). Residues 341–359 (ISFSIVLRMAVTRQFPWAV) form a helical membrane-spanning segment. Residues 360–860 (QTWYDSLGVI…YLRFLTAHKN (501 aa)) lie on the Cytoplasmic side of the membrane. Residues Trp-402, Ser-435, 459–466 (GSTGAGKT), and Gln-494 contribute to the ATP site. The ABC transporter 1 domain maps to 422–647 (ISNEDPSAFF…RPEFSSHLIG (226 aa)). The tract at residues 652–833 (NAERRNSIIT…EEINEEDLKE (182 aa)) is disordered R region. Residues 750 to 760 (PRSNFLNTGPT) are compositionally biased toward polar residues. Residues 861 to 881 (FIFILVFCLVIFFVEVAASSA) form a helical membrane-spanning segment. The region spanning 880–1163 (SAWLWIIKRN…ASIDVDSLMR (284 aa)) is the ABC transmembrane type-1 2 domain. Residues 882-923 (WLWIIKRNAPAINMTSNENVSEVSDTLSVIVTHTSFYYVFYI) are Extracellular-facing. 2 N-linked (GlcNAc...) asparagine glycosylation sites follow: Asn-894 and Asn-900. The chain crosses the membrane as a discontinuously helical span at residues 924–944 (YVGVADSLLALGIFRGLPLVH). At 945 to 995 (SLISVSKVLHKKMLHAILHAPMSTFNTMRAGRILNRFSKDTAILDDILPLS) the chain is on the cytoplasmic side. A helical transmembrane segment spans residues 996–1016 (IFDLTQLVLIVIGAITVVSLL). The Extracellular segment spans residues 1017–1018 (EP). Residues 1019-1039 (YIFLATVPVIVAFILLRSYFL) form a helical membrane-spanning segment. Over 1040–1100 (HTSQQLKQLE…TANWFLYLST (61 aa)) the chain is Cytoplasmic. The helical transmembrane segment at 1101-1121 (LRWFQMTIEMIFVIFFIAVSF) threads the bilayer. At 1122-1135 (ISIATSGAGEEKVG) the chain is on the extracellular side. Residues 1136–1156 (IVLTLAMNIMNTLQWAVNASI) form a helical membrane-spanning segment. Residues 1157-1485 (DVDSLMRSVS…TEEEVQDTRL (329 aa)) lie on the Cytoplasmic side of the membrane. An ABC transporter 2 domain is found at 1213–1446 (MTVKNLSANY…KSFFKQAISH (234 aa)). ATP is bound by residues Tyr-1222 and 1247–1254 (GRTGSGKS). Positions 1458–1485 (RNSSKRKSRPQISALQEETEEEVQDTRL) are disordered. Residues 1474–1485 (EETEEEVQDTRL) show a composition bias toward acidic residues. Positions 1483–1485 (TRL) match the PDZ-binding motif.

It belongs to the ABC transporter superfamily. ABCC family. CFTR transporter (TC 3.A.1.202) subfamily. Monomer; does not require oligomerization for channel activity. May form oligomers in the membrane. Phosphorylated; cAMP treatment promotes phosphorylation and activates the channel. Dephosphorylation decreases the ATPase activity (in vitro). Phosphorylation at PKA sites activates the channel. Phosphorylation at PKC sites enhances the response to phosphorylation by PKA.

Its subcellular location is the apical cell membrane. The protein localises to the early endosome membrane. The protein resides in the cell membrane. It is found in the recycling endosome membrane. It localises to the endoplasmic reticulum membrane. It catalyses the reaction ATP + H2O + closed Cl(-) channel = ADP + phosphate + open Cl(-) channel.. The catalysed reaction is chloride(in) = chloride(out). It carries out the reaction hydrogencarbonate(in) = hydrogencarbonate(out). The enzyme catalyses ATP + H2O = ADP + phosphate + H(+). Epithelial ion channel that plays an important role in the regulation of epithelial ion and water transport and fluid homeostasis. Mediates the transport of chloride ions across the cell membrane. Possesses an intrinsic ATPase activity and utilizes ATP to gate its channel; the passive flow of anions through the channel is gated by cycles of ATP binding and hydrolysis by the ATP-binding domains. The ion channel is also permeable to HCO(3)(-); selectivity depends on the extracellular chloride concentration. Exerts its function also by modulating the activity of other ion channels and transporters. Contributes to the regulation of the pH and the ion content of the epithelial fluid layer. This chain is Cystic fibrosis transmembrane conductance regulator, found in Xenopus laevis (African clawed frog).